The following is a 673-amino-acid chain: DNA ligase (673 aa).

Residues 33-37 (DHQYD), 83-84 (SL), and Glu-117 contribute to the NAD(+) site. Lys-119 functions as the N6-AMP-lysine intermediate in the catalytic mechanism. 4 residues coordinate NAD(+): Arg-140, Glu-175, Lys-282, and Lys-306. 4 residues coordinate Zn(2+): Cys-400, Cys-403, Cys-418, and Cys-424. The region spanning 592-673 (RGSSAISGKT…WVKMVEDARS (82 aa)) is the BRCT domain.

The protein belongs to the NAD-dependent DNA ligase family. LigA subfamily. Mg(2+) serves as cofactor. Mn(2+) is required as a cofactor.

It carries out the reaction NAD(+) + (deoxyribonucleotide)n-3'-hydroxyl + 5'-phospho-(deoxyribonucleotide)m = (deoxyribonucleotide)n+m + AMP + beta-nicotinamide D-nucleotide.. In terms of biological role, DNA ligase that catalyzes the formation of phosphodiester linkages between 5'-phosphoryl and 3'-hydroxyl groups in double-stranded DNA using NAD as a coenzyme and as the energy source for the reaction. It is essential for DNA replication and repair of damaged DNA. The chain is DNA ligase from Anaplasma marginale (strain Florida).